Reading from the N-terminus, the 268-residue chain is Tryptophan synthase alpha chain (268 aa).

Catalysis depends on proton acceptor residues glutamate 49 and aspartate 60.

It belongs to the TrpA family. In terms of assembly, tetramer of two alpha and two beta chains.

The catalysed reaction is (1S,2R)-1-C-(indol-3-yl)glycerol 3-phosphate + L-serine = D-glyceraldehyde 3-phosphate + L-tryptophan + H2O. Its pathway is amino-acid biosynthesis; L-tryptophan biosynthesis; L-tryptophan from chorismate: step 5/5. The alpha subunit is responsible for the aldol cleavage of indoleglycerol phosphate to indole and glyceraldehyde 3-phosphate. This Escherichia coli O1:K1 / APEC protein is Tryptophan synthase alpha chain.